The chain runs to 381 residues: UDP-N-acetylglucosamine--N-acetylmuramyl-(pentapeptide) pyrophosphoryl-undecaprenol N-acetylglucosamine transferase (381 aa).

Residues 10-12 (TGG), Asn124, Arg165, Ser190, Ile245, and Gln290 each bind UDP-N-acetyl-alpha-D-glucosamine. The interval 361–381 (WGSPAGQERPGHGPVRPPDLA) is disordered.

It belongs to the glycosyltransferase 28 family. MurG subfamily.

It is found in the cell inner membrane. The enzyme catalyses di-trans,octa-cis-undecaprenyl diphospho-N-acetyl-alpha-D-muramoyl-L-alanyl-D-glutamyl-meso-2,6-diaminopimeloyl-D-alanyl-D-alanine + UDP-N-acetyl-alpha-D-glucosamine = di-trans,octa-cis-undecaprenyl diphospho-[N-acetyl-alpha-D-glucosaminyl-(1-&gt;4)]-N-acetyl-alpha-D-muramoyl-L-alanyl-D-glutamyl-meso-2,6-diaminopimeloyl-D-alanyl-D-alanine + UDP + H(+). It functions in the pathway cell wall biogenesis; peptidoglycan biosynthesis. Functionally, cell wall formation. Catalyzes the transfer of a GlcNAc subunit on undecaprenyl-pyrophosphoryl-MurNAc-pentapeptide (lipid intermediate I) to form undecaprenyl-pyrophosphoryl-MurNAc-(pentapeptide)GlcNAc (lipid intermediate II). This Anaeromyxobacter sp. (strain Fw109-5) protein is UDP-N-acetylglucosamine--N-acetylmuramyl-(pentapeptide) pyrophosphoryl-undecaprenol N-acetylglucosamine transferase.